Here is a 926-residue protein sequence, read N- to C-terminus: Glycogenin (926 aa).

Residues Leu-10, Thr-12, Tyr-16, and Arg-85 each coordinate UDP. Positions 10, 12, 16, 85, 94, 111, 112, 113, 145, 146, 184, 187, and 188 each coordinate UDP-alpha-D-glucose. The UDP site is built by Asp-111, Ala-112, and Asp-113. Asp-111 is a binding site for Mn(2+). Position 113 (Asp-113) interacts with Mn(2+). Residue Tyr-219 is glycosylated (O-linked (Glc...) tyrosine). The UDP site is built by His-236, Gly-239, and Lys-242. His-236 is a Mn(2+) binding site. 2 residues coordinate UDP-alpha-D-glucose: Gly-239 and Lys-242. Disordered stretches follow at residues 379-432, 452-476, 547-584, 611-749, and 768-903; these read PSVS…PEMS, YYAH…LPKE, SIQN…PPRH, MSGK…ETVQ, and LPHA…PNTD. Residues 386–402 show a composition bias toward pro residues; that stretch reads LTPPPADAAPAPAPAPV. A compositionally biased stretch (polar residues) spans 404-413; sequence TQTEQKTAQP. Over residues 456–469 the composition is skewed to basic and acidic residues; that stretch reads PESHRPATEHKEPE. Residues 557–566 are compositionally biased toward low complexity; sequence AHSQHQSHAT. Residues 655-683 show a composition bias toward polar residues; it reads SLHSLQSVPGTPRTQYSTFGKSPRLTNAR. Positions 692–704 are enriched in acidic residues; that stretch reads EQPEDSADGDDEN. Residues 733-745 show a composition bias toward basic and acidic residues; that stretch reads DRWAQTDRVKTVD. Over residues 788 to 798 the composition is skewed to gly residues; that stretch reads SGNGRAGGGGQ. Polar residues predominate over residues 800–812; that stretch reads EAQTQHQSTYYEY. Composition is skewed to low complexity over residues 813–824 and 851–875; these read QQQHPHSQQSRQ and HAQG…NPNL.

This sequence belongs to the glycosyltransferase 8 family. Glycogenin subfamily. The cofactor is Mn(2+).

The protein resides in the cytoplasm. It is found in the vacuole. The enzyme catalyses L-tyrosyl-[glycogenin] + UDP-alpha-D-glucose = alpha-D-glucosyl-L-tyrosyl-[glycogenin] + UDP + H(+). It carries out the reaction [1,4-alpha-D-glucosyl](n)-L-tyrosyl-[glycogenin] + UDP-alpha-D-glucose = [1,4-alpha-D-glucosyl](n+1)-L-tyrosyl-[glycogenin] + UDP + H(+). Its function is as follows. Self-glucosylating initiator of glycogen synthesis. It catalyzes the formation of a short alpha (1,4)-glucosyl chain covalently attached via a glucose 1-O-tyrosyl linkage to internal tyrosine residues and these chains act as primers for the elongation reaction catalyzed by glycogen synthase. In Cryptococcus neoformans var. grubii serotype A (strain H99 / ATCC 208821 / CBS 10515 / FGSC 9487) (Filobasidiella neoformans var. grubii), this protein is Glycogenin.